The following is a 586-amino-acid chain: MEKIQAEKSQSAIEFKNIVVDFGESIAIDNINLTVKKKELVTLLGPSGCGKTTSLSVIAGLIAPTSGQVLFNGYDVTKKPPQQRKLGLVFQNYALYPHMSVFENIVFPLYSDTSWREAIFEKNTWAQHDINCLILKANGATSEELAELNRLMQQRIDEPKRMAYQINDLMVSVFQKQSELEANLKLIPRKKQFAIISLSKETLSQIRDVETKAKAALETADSAEVEQTIKSELKQKLSEIKANYHDEKANIKAYWWEMLANIKTELKTEKTAIKQTNDYAKLKELKWKIHFEPLNLKKQYRSYFKQLKAKYSLKDGNLTESELSQIEELQKRIVSLKDFINRTAKEVAEKLEITKILHKRPANISGGQQQRVAIARAIVRRPKVLLMDEPLSNLDAKLRVQTRQWIRKFQQDLQITTVFVTHDQEEAMSISDTIVCMSTGKVQQIGSPSELYLKPANEFVATFLGSPEMNIVNATVKAGQLLWNENPLVKTKFDLPDGAIRVGFRYDEVTAPKNDGSPVFSGTLISVENLGKHMVGVVESNGVQLNVRLELSHQFEVGNAVKFTIKPNGLHFFDPQTTQRVEVKHV.

An ABC transporter domain is found at 13-464 (IEFKNIVVDF…PANEFVATFL (452 aa)). An ATP-binding site is contributed by 45–52 (GPSGCGKT).

Belongs to the ABC transporter superfamily.

The protein is Putative ABC transporter ATP-binding protein MG187 homolog of Mycoplasma pneumoniae (strain ATCC 29342 / M129 / Subtype 1) (Mycoplasmoides pneumoniae).